A 174-amino-acid polypeptide reads, in one-letter code: NADH-ubiquinone oxidoreductase chain 6 (174 aa).

Transmembrane regions (helical) follow at residues 1–21, 24–44, 47–67, 86–106, and 151–171; these read MTYVLFLLSVGLVMGFVGFSS, SPIYGGLVLIVSGVVGCAIIL, GGGYMGLMVFLIYLGGMMVVF, VEVLVSVLVGLAMEVGLVLWV, and WLVVVTGWTLFVGVYIVIEIA.

This sequence belongs to the complex I subunit 6 family. As to quaternary structure, core subunit of respiratory chain NADH dehydrogenase (Complex I) which is composed of 45 different subunits.

Its subcellular location is the mitochondrion inner membrane. It carries out the reaction a ubiquinone + NADH + 5 H(+)(in) = a ubiquinol + NAD(+) + 4 H(+)(out). Core subunit of the mitochondrial membrane respiratory chain NADH dehydrogenase (Complex I) which catalyzes electron transfer from NADH through the respiratory chain, using ubiquinone as an electron acceptor. Essential for the catalytic activity and assembly of complex I. In Gorilla gorilla gorilla (Western lowland gorilla), this protein is NADH-ubiquinone oxidoreductase chain 6 (MT-ND6).